Reading from the N-terminus, the 459-residue chain is Taurine--pyruvate aminotransferase (459 aa).

Lys287 carries the post-translational modification N6-(pyridoxal phosphate)lysine.

Belongs to the class-III pyridoxal-phosphate-dependent aminotransferase family. It depends on pyridoxal 5'-phosphate as a cofactor.

The protein localises to the cytoplasm. It carries out the reaction taurine + pyruvate = sulfoacetaldehyde + L-alanine. It functions in the pathway organosulfur degradation; taurine degradation via aerobic pathway; acetyl phosphate and sulfite from taurine: step 1/2. In terms of biological role, catalyzes the degradation of taurine into alanine and sulfoacetaldehyde. In Rhodobacter capsulatus (strain ATCC BAA-309 / NBRC 16581 / SB1003), this protein is Taurine--pyruvate aminotransferase.